Reading from the N-terminus, the 449-residue chain is Methionine aminopeptidase 2 (449 aa).

The tract at residues 1-91 (MAAQAAPELA…PRIPLTTLFP (91 aa)) is disordered. Residues 34–50 (EEAENEGDSEDDRDDEQ) are compositionally biased toward acidic residues. Over residues 61–75 (KKKKKKRPKKKKKTA) the composition is skewed to basic residues. His199 contributes to the substrate binding site. A divalent metal cation is bound by residues Asp219, Asp230, and His299. His307 serves as a coordination point for substrate. A divalent metal cation-binding residues include Glu335 and Glu430.

This sequence belongs to the peptidase M24A family. Methionine aminopeptidase eukaryotic type 2 subfamily. Co(2+) is required as a cofactor. It depends on Zn(2+) as a cofactor. Mn(2+) serves as cofactor. The cofactor is Fe(2+).

It is found in the cytoplasm. It catalyses the reaction Release of N-terminal amino acids, preferentially methionine, from peptides and arylamides.. In terms of biological role, cotranslationally removes the N-terminal methionine from nascent proteins. The N-terminal methionine is often cleaved when the second residue in the primary sequence is small and uncharged (Met-Ala-, Cys, Gly, Pro, Ser, Thr, or Val). This is Methionine aminopeptidase 2 from Trichophyton verrucosum (strain HKI 0517).